We begin with the raw amino-acid sequence, 553 residues long: Putative transport protein YidE (553 aa).

Transmembrane regions (helical) follow at residues 4–24, 28–48, 65–85, 95–115, and 158–178; these read IALT…IGNI, GVGF…HFVD, FGLI…FFAS, LFAV…HKIF, and MSYA…MWLM. RCK C-terminal domains lie at 192-276 and 279-361; these read KHES…VIGK and DTSL…VVGN. The next 6 membrane-spanning stretches (helical) occupy residues 371–391, 393–413, 437–457, 464–484, 493–513, and 533–553; these read MLPV…PLFV, GFPV…ALIL, LGIV…FVDT, LSWI…VGLL, YLTL…LAFA, and LVMF…WGMG.

The protein belongs to the AAE transporter (TC 2.A.81) family. YidE subfamily.

It is found in the cell membrane. This Salmonella heidelberg (strain SL476) protein is Putative transport protein YidE.